The following is a 170-amino-acid chain: MNSRLCIMALLLCFSQALLGHFTVIEEIEKLKKYFNSSSSDVGDQKDIVSDILRNWQNDRDVKVIESQIVSFYLKLFEALKEHKTIQESINTIRADLIVNFFNNSREKMDDFIKLTTIPVNDLQVQRKAVNELVGVMHRLSSNIRRKKKGSRCCFGGGDRLNQNYPARSI.

An N-terminal signal peptide occupies residues 1–20 (MNSRLCIMALLLCFSQALLG). Asn-36 and Asn-103 each carry an N-linked (GlcNAc...) asparagine glycan.

The protein belongs to the type II (or gamma) interferon family. Homodimer. Interacts with IFNGR1 (via extracellular domain); this interaction promotes IFNGR1 dimerization. As to expression, released primarily from activated T lymphocytes.

It is found in the secreted. Its function is as follows. Type II interferon produced by immune cells such as T-cells and NK cells that plays crucial roles in antimicrobial, antiviral, and antitumor responses by activating effector immune cells and enhancing antigen presentation. Primarily signals through the JAK-STAT pathway after interaction with its receptor IFNGR1 to affect gene regulation. Upon IFNG binding, IFNGR1 intracellular domain opens out to allow association of downstream signaling components JAK2, JAK1 and STAT1, leading to STAT1 activation, nuclear translocation and transcription of IFNG-regulated genes. Many of the induced genes are transcription factors such as IRF1 that are able to further drive regulation of a next wave of transcription. Plays a role in class I antigen presentation pathway by inducing a replacement of catalytic proteasome subunits with immunoproteasome subunits. In turn, increases the quantity, quality, and repertoire of peptides for class I MHC loading. Increases the efficiency of peptide generation also by inducing the expression of activator PA28 that associates with the proteasome and alters its proteolytic cleavage preference. Up-regulates as well MHC II complexes on the cell surface by promoting expression of several key molecules such as cathepsins B/CTSB, H/CTSH, and L/CTSL. Participates in the regulation of hematopoietic stem cells during development and under homeostatic conditions by affecting their development, quiescence, and differentiation. The protein is Interferon gamma (IFNG) of Sigmodon hispidus (Hispid cotton rat).